The chain runs to 156 residues: Cyclic pyranopterin monophosphate synthase (156 aa).

Substrate-binding positions include 73 to 75 (LCH) and 110 to 111 (ME). D125 is a catalytic residue.

It belongs to the MoaC family. As to quaternary structure, homohexamer; trimer of dimers.

It carries out the reaction (8S)-3',8-cyclo-7,8-dihydroguanosine 5'-triphosphate = cyclic pyranopterin phosphate + diphosphate. The protein operates within cofactor biosynthesis; molybdopterin biosynthesis. Catalyzes the conversion of (8S)-3',8-cyclo-7,8-dihydroguanosine 5'-triphosphate to cyclic pyranopterin monophosphate (cPMP). This chain is Cyclic pyranopterin monophosphate synthase, found in Pseudomonas entomophila (strain L48).